Reading from the N-terminus, the 770-residue chain is Coiled-coil alpha-helical rod protein 1 (770 aa).

Coiled coils occupy residues 56–289 (STVT…DLQA), 334–420 (LRNW…RQEQ), and 476–669 (GLMA…RKEE). Disordered regions lie at residues 573–592 (LEAA…SLRQ), 641–672 (LRQI…EGQR), 700–721 (NKKC…AASC), and 744–770 (SRDE…PLLS). Over residues 648 to 672 (ATQEKERNQELRRLQDEARKEEGQR) the composition is skewed to basic and acidic residues. A compositionally biased stretch (low complexity) spans 701–721 (KKCSPRSVESSSSESPAAASC).

It localises to the cytoplasm. The protein resides in the nucleus. May be a regulator of keratinocyte proliferation or differentiation. In Mus musculus (Mouse), this protein is Coiled-coil alpha-helical rod protein 1 (Cchcr1).